The chain runs to 1779 residues: 6-methylsalicylic acid synthase (1779 aa).

Polar residues predominate over residues 1–11; the sequence is MSASRSSTKFS. Residues 1-40 form a disordered region; that stretch reads MSASRSSTKFSTPAEGSDNGKEFTTPATSTEGHEVPDRPG. Residues 31-40 are compositionally biased toward basic and acidic residues; it reads EGHEVPDRPG. Residues 43 to 472 enclose the Ketosynthase family 3 (KS3) domain; the sequence is LADVAIIGMA…GTVSHAVLEA (430 aa). Catalysis depends on for beta-ketoacyl synthase activity residues C215, H350, and H392. The malonyl-CoA:ACP transacylase (MAT) domain stretch occupies residues 586 to 883; it reads WIFSGHGAQW…TPTMVRRQPA (298 aa). The active-site For acyl/malonyl transferase activity is the S672. The product template (PT) domain stretch occupies residues 942–1218; the sequence is THDPAANNLL…SFAGLEGESF (277 aa). Residues 948 to 1064 are N-terminal hotdog fold; that stretch reads NNLLGKRIAL…AAVGAANVVP (117 aa). Residues 948–1219 form the PKS/mFAS DH domain; the sequence is NNLLGKRIAL…FAGLEGESFS (272 aa). H980 (proton acceptor; for dehydratase activity) is an active-site residue. Positions 1079-1219 are C-terminal hotdog fold; it reads PQKLADSFSI…FAGLEGESFS (141 aa). Residue D1138 is the Proton donor; for dehydratase activity of the active site. Residues 1703 to 1777 form the Carrier domain; sequence QHLRDVINGC…HLVKHFTKEL (75 aa). S1737 bears the O-(pantetheine 4'-phosphoryl)serine mark.

The catalysed reaction is 3 malonyl-CoA + acetyl-CoA + NADPH + 3 H(+) = 6-methylsalicylate + 3 CO2 + NADP(+) + 4 CoA + H2O. It functions in the pathway secondary metabolite biosynthesis; terpenoid biosynthesis. Non-reducing polyketide synthase; part of the gene cluster that mediates the biosynthesis of yanuthone D, a fungal isoprenoid epoxycyclohexenone that acts as an antibiotic against fungi and bacteria. The first step of the pathway is the synthesis of 6-methylsalicylic acid (6-MSA) by the polyketide synthase yanA. 6-MSA is then converted to m-cresol by the decarboxylase yanB. The cytochrome P450 monooxygenase yanC then catalyzes the oxidation of m-cresol to toluquinol. Epoxidation of toluquinol is then performed by the short chain dehydrogenase yanD, with the help of yanE, and a further prenylation by yanG leads to 7-deacetoxyyanuthone A. The next step is the hydroxylation of C-22 of 7-deacetoxyyanuthone A by the cytochrome P450 monooxygenase yanH to yield 22-deacetylyanuthone A. O-Mevalon transferase yanI then attaches mevalon to the hydroxyl group of 22-deacetylyanuthone A to produce yanuthone E. Finally, the FAD-dependent monooxygenase yanF oxidizes the hydroxyl group at C15 of yanuthone E to form yanuthone D. Furthermore, several branching points in the pathway lead to the production of yanuthones F and G from 7-deacetoxyyanuthone A; yanuthones H and I from 22-deacetylyanuthone A; and yanuthone J from yanuthone E. The sequence is that of 6-methylsalicylic acid synthase from Aspergillus niger (strain ATCC 1015 / CBS 113.46 / FGSC A1144 / LSHB Ac4 / NCTC 3858a / NRRL 328 / USDA 3528.7).